A 94-amino-acid polypeptide reads, in one-letter code: Ubiquitin-like protein ATG12B (94 aa).

Position 2 is an N-acetylalanine (Ala2). Gly94 is covalently cross-linked (Glycyl lysine isopeptide (Gly-Lys) (interchain with K-128 in ATG5)).

This sequence belongs to the ATG12 family. In terms of tissue distribution, ubiquitous.

The protein resides in the cytoplasm. In terms of biological role, ubiquitin-like protein involved in cytoplasm to vacuole transport (Cvt) and autophagy vesicles formation. Conjugation with ATG5 through a ubiquitin-like conjugating system involving also ATG7 as an E1-like activating enzyme and ATG10 as an E2-like conjugating enzyme, is essential for its function. ATG12/ATG5 conjugate has an essential role in plant nutrient recycling. The sequence is that of Ubiquitin-like protein ATG12B (ATG12B) from Arabidopsis thaliana (Mouse-ear cress).